The chain runs to 477 residues: MIRRLQDNGDLIRAFPRVHFVGIGGAGMTGIAEVMLTLGYEVSGSDNADNAATRRLATLGARVMRGHSAANVLGTDCVVVSSAIREDNPELMEARSQRIPIMPRAAMLAELMRFRHGIAVAGTHGKTTTTSLIAAVLSEGGLDPTFVIGGQLLAAGANAKLGAGQWLVVEADESDGSFLRLNPLVAVVTNIDADHLENYGNDFSRIKDAFTEFLQRLPFYGLALLCLDDPEVAELVGKARRHVMTYGIDAAADVRAEDVVQDGARMCFTLCLPEGKVIPVTLALPGRHNVLNALAASAVGWQLGVPPEVIGRALKSFVGIGRRFNDLGDVAIGNGACVRLIDDYGHHPRELEAVFAAARGGWPDKRLVVAFQPHRYSRTRDQFDAFAAVLSSVDALVLSEVYPAGEVPIPGADAKALARAIRARGRSEPVVVGQVASLIDVLPDVLQEGDLLLMMGAGDIGSIAQRIVHDGFVFGEV.

122-128 (GTHGKTT) is an ATP binding site.

Belongs to the MurCDEF family.

It localises to the cytoplasm. It carries out the reaction UDP-N-acetyl-alpha-D-muramate + L-alanine + ATP = UDP-N-acetyl-alpha-D-muramoyl-L-alanine + ADP + phosphate + H(+). Its pathway is cell wall biogenesis; peptidoglycan biosynthesis. Functionally, cell wall formation. This is UDP-N-acetylmuramate--L-alanine ligase from Xylella fastidiosa (strain M23).